A 435-amino-acid polypeptide reads, in one-letter code: Enolase (435 aa).

Position 163 (glutamine 163) interacts with (2R)-2-phosphoglycerate. Glutamate 205 serves as the catalytic Proton donor. Mg(2+)-binding residues include aspartate 243, glutamate 292, and aspartate 319. 4 residues coordinate (2R)-2-phosphoglycerate: lysine 344, arginine 373, serine 374, and lysine 395. The active-site Proton acceptor is the lysine 344.

It belongs to the enolase family. It depends on Mg(2+) as a cofactor.

The protein localises to the cytoplasm. Its subcellular location is the secreted. It localises to the cell surface. The enzyme catalyses (2R)-2-phosphoglycerate = phosphoenolpyruvate + H2O. Its pathway is carbohydrate degradation; glycolysis; pyruvate from D-glyceraldehyde 3-phosphate: step 4/5. Functionally, catalyzes the reversible conversion of 2-phosphoglycerate (2-PG) into phosphoenolpyruvate (PEP). It is essential for the degradation of carbohydrates via glycolysis. The protein is Enolase of Streptococcus equi subsp. zooepidemicus (strain MGCS10565).